The chain runs to 617 residues: Phenylalanine--tRNA ligase beta subunit (617 aa).

In terms of domain architecture, B5 spans 306 to 383; sequence IQEKQINAQV…IGYGYDNLKK (78 aa). Residues aspartate 361, aspartate 367, glutamate 370, and aspartate 371 each coordinate Mg(2+).

This sequence belongs to the phenylalanyl-tRNA synthetase beta subunit family. Type 2 subfamily. In terms of assembly, tetramer of two alpha and two beta subunits. The cofactor is Mg(2+).

It is found in the cytoplasm. The catalysed reaction is tRNA(Phe) + L-phenylalanine + ATP = L-phenylalanyl-tRNA(Phe) + AMP + diphosphate + H(+). The sequence is that of Phenylalanine--tRNA ligase beta subunit (phesB) from Dictyostelium discoideum (Social amoeba).